The primary structure comprises 108 residues: BH3-like motif-containing cell death inducer (108 aa).

The short motif at 5–12 (LPIEGQEI) is the BH3-like element.

In terms of tissue distribution, ubiquitously expressed.

The protein resides in the cytoplasm. Its subcellular location is the mitochondrion. Its function is as follows. Functions as a proapoptotic molecule through the caspase-dependent mitochondrial pathway of cell death. The sequence is that of BH3-like motif-containing cell death inducer (BLID) from Homo sapiens (Human).